A 1173-amino-acid polypeptide reads, in one-letter code: RNA polymerase-associated protein CTR9 homolog (1173 aa).

16 TPR repeats span residues 41 to 75 (LHIWIALALEYYKQGKTEEFVKLLEAARIDGNLDY), 129 to 162 (NHLLGRACFCLLEGDKMDQADAQFHFVLNQSPNN), 163 to 196 (IPALLGKACISFNKKDYRGALAYYKKALRTNPGC), 198 to 231 (AEVRLGMGHCFVKLNKLEKARLAFSRALELNSKC), 235 to 268 (LVGLAVLELNNKEADSIKNGVQLLSRAYTIDPSN), 306 to 339 (AESCYQLARSFHVQEDYDQAFQYYYQATQFASSS), 341 to 374 (VLPFFGLGQMYIYRGDKENASQCFEKVLKAYPNN), 412 to 444 (VEAWIELAQILEQTDIQGALSAYGTATRILQEK), 451 to 484 (PEILNNVGALHFRLGNLGEAKKYFLASLDRAKAE), 497 to 530 (VTTSYNLARLYEAMCEFHEAEKLYKNILREHPNY), 531 to 564 (VDCYLRLGAMARDKGNFYEASDWFKEALQINQDH), 566 to 598 (DAWSLIGNLHLAKQEWGPGQKKFERILKQPATQ), 613 to 646 (QTLHQPTRDREKEKRHQDRALAIYKQVLRNDAKN), 647 to 680 (LYAANGIGAVLAHKGYFREARDVFAQVREATADI), 681 to 714 (SDVWLNLAHIYVEQKQYISAVQMYENCLRKFYKH), and 717 to 750 (TEVVLYLARALFKCGKLQECKQTLLKARHVAPSD). A disordered region spans residues 892–1173 (TGETEATKEK…GSEHGSDDSD (282 aa)). Positions 900–912 (EKKRGGGGGRRSK) are enriched in basic residues. Over residues 917–929 (FDEFVNDDTDDDL) the composition is skewed to acidic residues. Thr925 carries the post-translational modification Phosphothreonine. Residues Ser932, Ser941, Ser943, and Ser970 each carry the phosphoserine modification. Residues 980-994 (KPKKRRPPRAEKKKA) are compositionally biased toward basic residues. Ser1020 and Ser1021 each carry phosphoserine. The span at 1023–1034 (EDKLKIADEGHP) shows a compositional bias: basic and acidic residues. Ser1037, Ser1039, Ser1041, Ser1079, Ser1083, Ser1085, Ser1095, and Ser1100 each carry phosphoserine. Residues 1097-1128 (SEQSDNESVQSGRSPSGASENENDSRPASPSA) show a composition bias toward polar residues. Over residues 1137-1159 (GSDNEGSGQGSGNESEPEGSNNE) the composition is skewed to low complexity. Basic and acidic residues predominate over residues 1160–1173 (ASDRGSEHGSDDSD).

As to quaternary structure, component of the PAF1 complex, which consists of CDC73, PAF1, LEO1, CTR9, RTF1 and SKIC8. The PAF1 complex interacts with PHF5A. Interacts with KMT2A/MLL1. Interacts with STAT3. Interacts with SETD5. Interacts with ERCC6. In terms of tissue distribution, widely expressed.

The protein localises to the nucleus speckle. Component of the PAF1 complex (PAF1C) which has multiple functions during transcription by RNA polymerase II and is implicated in regulation of development and maintenance of embryonic stem cell pluripotency. PAF1C associates with RNA polymerase II through interaction with POLR2A CTD non-phosphorylated and 'Ser-2'- and 'Ser-5'-phosphorylated forms and is involved in transcriptional elongation, acting both independently and synergistically with TCEA1 and in cooperation with the DSIF complex and HTATSF1. PAF1C is required for transcription of Hox and Wnt target genes. PAF1C is involved in hematopoiesis and stimulates transcriptional activity of KMT2A/MLL1. PAF1C is involved in histone modifications such as ubiquitination of histone H2B and methylation on histone H3 'Lys-4' (H3K4me3). PAF1C recruits the RNF20/40 E3 ubiquitin-protein ligase complex and the E2 enzyme UBE2A or UBE2B to chromatin which mediate monoubiquitination of 'Lys-120' of histone H2B (H2BK120ub1); UB2A/B-mediated H2B ubiquitination is proposed to be coupled to transcription. PAF1C is involved in mRNA 3' end formation probably through association with cleavage and poly(A) factors. Required for mono- and trimethylation on histone H3 'Lys-4' (H3K4me3) and dimethylation on histone H3 'Lys-79' (H3K4me3). Required for Hox gene transcription. Required for the trimethylation of histone H3 'Lys-4' (H3K4me3) on genes involved in stem cell pluripotency; this function is synergistic with CXXC1 indicative for an involvement of the SET1 complex. Involved in transcriptional regulation of IL6-responsive genes and in JAK-STAT pathway; may regulate DNA-association of STAT3. This is RNA polymerase-associated protein CTR9 homolog (Ctr9) from Mus musculus (Mouse).